The primary structure comprises 433 residues: Enolase (433 aa).

Q167 serves as a coordination point for (2R)-2-phosphoglycerate. The Proton donor role is filled by E209. 3 residues coordinate Mg(2+): D246, E291, and D318. (2R)-2-phosphoglycerate is bound by residues K343, R372, S373, and K394. Residue K343 is the Proton acceptor of the active site.

This sequence belongs to the enolase family. As to quaternary structure, component of the RNA degradosome, a multiprotein complex involved in RNA processing and mRNA degradation. Mg(2+) serves as cofactor.

It is found in the cytoplasm. It localises to the secreted. The protein localises to the cell surface. It catalyses the reaction (2R)-2-phosphoglycerate = phosphoenolpyruvate + H2O. The protein operates within carbohydrate degradation; glycolysis; pyruvate from D-glyceraldehyde 3-phosphate: step 4/5. In terms of biological role, catalyzes the reversible conversion of 2-phosphoglycerate (2-PG) into phosphoenolpyruvate (PEP). It is essential for the degradation of carbohydrates via glycolysis. The polypeptide is Enolase (Vibrio vulnificus (strain CMCP6)).